The following is a 215-amino-acid chain: N-(5'-phosphoribosyl)anthranilate isomerase (215 aa).

The protein belongs to the TrpF family.

The catalysed reaction is N-(5-phospho-beta-D-ribosyl)anthranilate = 1-(2-carboxyphenylamino)-1-deoxy-D-ribulose 5-phosphate. It functions in the pathway amino-acid biosynthesis; L-tryptophan biosynthesis; L-tryptophan from chorismate: step 3/5. This is N-(5'-phosphoribosyl)anthranilate isomerase from Paracoccus denitrificans (strain Pd 1222).